Consider the following 93-residue polypeptide: Small ribosomal subunit protein bS20 (93 aa).

Belongs to the bacterial ribosomal protein bS20 family.

In terms of biological role, binds directly to 16S ribosomal RNA. The chain is Small ribosomal subunit protein bS20 from Dictyoglomus turgidum (strain DSM 6724 / Z-1310).